The sequence spans 156 residues: Small ribosomal subunit protein uS7 (156 aa).

It belongs to the universal ribosomal protein uS7 family. As to quaternary structure, part of the 30S ribosomal subunit. Contacts proteins S9 and S11.

Functionally, one of the primary rRNA binding proteins, it binds directly to 16S rRNA where it nucleates assembly of the head domain of the 30S subunit. Is located at the subunit interface close to the decoding center, probably blocks exit of the E-site tRNA. The protein is Small ribosomal subunit protein uS7 of Thiomonas delicata (Thiomonas cuprina).